A 424-amino-acid polypeptide reads, in one-letter code: Putative pachytene checkpoint protein 2 (424 aa).

179-186 (GPPGTGKT) serves as a coordination point for ATP.

The protein belongs to the AAA ATPase family. PCH2 subfamily.

In terms of biological role, plays a key role in chromosome recombination during meiosis. The protein is Putative pachytene checkpoint protein 2 (pch-2) of Caenorhabditis elegans.